The following is a 311-amino-acid chain: Putative F-box protein At3g28280 (311 aa).

The region spanning 1–43 is the F-box domain; that stretch reads MNSLPEDLLAMILVKLPIKIFTTFKIVCTQWESMVDSPYFRDL.

The sequence is that of Putative F-box protein At3g28280 from Arabidopsis thaliana (Mouse-ear cress).